Here is a 36-residue protein sequence, read N- to C-terminus: Photosystem I reaction center subunit VIII (36 aa).

Residues 9-29 (IFVPLVGLVFPAIAMASLSLY) traverse the membrane as a helical segment.

It belongs to the PsaI family.

The protein localises to the plastid. Its subcellular location is the chloroplast thylakoid membrane. In terms of biological role, may help in the organization of the PsaL subunit. This is Photosystem I reaction center subunit VIII from Phalaenopsis aphrodite subsp. formosana (Moth orchid).